The sequence spans 889 residues: Vacuolar protein sorting-associated protein 54 (889 aa).

Composition is skewed to polar residues over residues 1–14 and 30–44; these read MSIS…SQGL and PSRN…IEGD. A disordered region spans residues 1 to 44; sequence MSISETPHNKSQGLQKAAGRPKIVVPEGSPSRNSDSGSFTIEGD. Serine 69 and serine 72 each carry phosphoserine. Threonine 74 carries the phosphothreonine modification. A coiled-coil region spans residues 286-321; sequence LSEVDNIQKRALDTMSELKELAQNIKTIDAENIRKK. Basic and acidic residues predominate over residues 729-744; sequence HDCENGRSEDKEKDEG. A disordered region spans residues 729-748; sequence HDCENGRSEDKEKDEGNETY.

Belongs to the VPS54 family. Component of the Golgi-associated retrograde protein (GARP) complex, also called VFT (VPS fifty-three) complex, composed of VPS51, VPS52, VPS53 and VPS54. Also interacts with YPT6, TLG1, RBL2, SEC10, SEC15, EXO84 and ARL1.

The protein resides in the golgi apparatus. The protein localises to the trans-Golgi network membrane. It is found in the endosome membrane. Its subcellular location is the mitochondrion membrane. In terms of biological role, involved in retrograde transport from early and late endosomes to late Golgi by linking the vesicle through the t-SNARE TGL1 to the Golgi, leading to the membrane fusion between late Golgi and endosomal vesicles. Also seems to be involved in protein transport from Golgi to the plasma membrane and is required for the integrity of the actin cytoskeleton. This Saccharomyces cerevisiae (strain ATCC 204508 / S288c) (Baker's yeast) protein is Vacuolar protein sorting-associated protein 54 (VPS54).